A 202-amino-acid polypeptide reads, in one-letter code: ADP-ribosylation factor-like protein 15 (202 aa).

GTP-binding positions include 39 to 46 (GLTGSGKT), 82 to 86 (ELGGA), and 142 to 145 (NHQD).

This sequence belongs to the small GTPase superfamily. Arf family.

The chain is ADP-ribosylation factor-like protein 15 (ARL15) from Bos taurus (Bovine).